The primary structure comprises 380 residues: Protein Wnt-5a (380 aa).

An N-terminal signal peptide occupies residues 1–40; it reads MRKNLWTFQFGGEASGLVGSAMVSQHFVVLLMSLYCLTQS. Cysteine 104 and cysteine 115 are oxidised to a cystine. Asparagine 114 and asparagine 120 each carry an N-linked (GlcNAc...) asparagine glycan. 10 disulfides stabilise this stretch: cysteine 154/cysteine 162, cysteine 164/cysteine 182, cysteine 238/cysteine 252, cysteine 240/cysteine 247, cysteine 309/cysteine 340, cysteine 325/cysteine 335, cysteine 339/cysteine 379, cysteine 355/cysteine 370, cysteine 357/cysteine 367, and cysteine 362/cysteine 363. Serine 244 carries O-palmitoleoyl serine; by PORCN lipidation. 2 N-linked (GlcNAc...) asparagine glycosylation sites follow: asparagine 312 and asparagine 326.

It belongs to the Wnt family. In terms of processing, palmitoleoylation is required for efficient binding to frizzled receptors. Depalmitoleoylation leads to Wnt signaling pathway inhibition. In terms of tissue distribution, found primarily in ectoderm with lower levels of expression in mesoderm. Detected in the head and tail with lower expression in the middle of the embryo. No expression was found in the notochord.

The protein resides in the secreted. It localises to the extracellular space. The protein localises to the extracellular matrix. Its function is as follows. Ligand for members of the frizzled family of seven transmembrane receptors. Can activate or inhibit canonical Wnt signaling, depending on receptor context. Plays a role in normal embryonic development. The chain is Protein Wnt-5a (wnt5a) from Xenopus laevis (African clawed frog).